A 395-amino-acid chain; its full sequence is Elongation factor Tu (395 aa).

Residues 10–204 (KPHVNIGTIG…AVDSYIPTPE (195 aa)) form the tr-type G domain. The tract at residues 19–26 (GHVDHGKT) is G1. 19–26 (GHVDHGKT) is a binding site for GTP. Thr26 contacts Mg(2+). A G2 region spans residues 60–64 (GITIS). Residues 81 to 84 (DCPG) form a G3 region. GTP contacts are provided by residues 81–85 (DCPGH) and 136–139 (NKCD). The G4 stretch occupies residues 136–139 (NKCD). Residues 174-176 (SAL) are G5.

Belongs to the TRAFAC class translation factor GTPase superfamily. Classic translation factor GTPase family. EF-Tu/EF-1A subfamily. Monomer.

It is found in the cytoplasm. The enzyme catalyses GTP + H2O = GDP + phosphate + H(+). Its function is as follows. GTP hydrolase that promotes the GTP-dependent binding of aminoacyl-tRNA to the A-site of ribosomes during protein biosynthesis. The chain is Elongation factor Tu from Listeria monocytogenes serotype 4b (strain CLIP80459).